Consider the following 600-residue polypeptide: Ligand-dependent nuclear receptor corepressor-like protein (600 aa).

3 disordered regions span residues 1-24 (MEKG…QCRS), 102-122 (SVIG…GQSN), and 495-519 (DGTS…KRGR). Residues 104–122 (IGSSQSTPTEELSSQGQSN) show a composition bias toward polar residues. Residues 514–566 (RKKRGRYRQYDHEIMEEAIAMVMSGKMSVSKAQGIYGVPHSTLEYKVKERSGT) enclose the HTH psq-type domain. Residues 542–562 (VSKAQGIYGVPHSTLEYKVKE) constitute a DNA-binding region (H-T-H motif). Residues 581-600 (GLFNMTDSGTGSCKTSSKPV) are disordered. Over residues 583–600 (FNMTDSGTGSCKTSSKPV) the composition is skewed to polar residues.

It localises to the nucleus. Its function is as follows. May act as transcription activator that binds DNA elements with the sequence 5'-CCCTATCGATCGATCTCTACCT-3'. This chain is Ligand-dependent nuclear receptor corepressor-like protein (LCORL), found in Gallus gallus (Chicken).